The chain runs to 413 residues: Imidazolonepropionase (413 aa).

The Fe(3+) site is built by His79 and His81. The Zn(2+) site is built by His79 and His81. 4-imidazolone-5-propanoate is bound by residues Arg88, Tyr151, and His184. Tyr151 contributes to the N-formimidoyl-L-glutamate binding site. His248 is a binding site for Fe(3+). A Zn(2+)-binding site is contributed by His248. Position 251 (Glu251) interacts with 4-imidazolone-5-propanoate. Residue Asp322 participates in Fe(3+) binding. A Zn(2+)-binding site is contributed by Asp322. N-formimidoyl-L-glutamate contacts are provided by Asn324 and Gly326. A 4-imidazolone-5-propanoate-binding site is contributed by Ser327.

The protein belongs to the metallo-dependent hydrolases superfamily. HutI family. The cofactor is Zn(2+). Fe(3+) serves as cofactor.

The protein resides in the cytoplasm. It catalyses the reaction 4-imidazolone-5-propanoate + H2O = N-formimidoyl-L-glutamate. The protein operates within amino-acid degradation; L-histidine degradation into L-glutamate; N-formimidoyl-L-glutamate from L-histidine: step 3/3. Its function is as follows. Catalyzes the hydrolytic cleavage of the carbon-nitrogen bond in imidazolone-5-propanoate to yield N-formimidoyl-L-glutamate. It is the third step in the universal histidine degradation pathway. The protein is Imidazolonepropionase of Fusobacterium nucleatum subsp. nucleatum (strain ATCC 25586 / DSM 15643 / BCRC 10681 / CIP 101130 / JCM 8532 / KCTC 2640 / LMG 13131 / VPI 4355).